The primary structure comprises 498 residues: ATP synthase subunit beta, chloroplastic (498 aa).

Residue 172–179 (GGAGVGKT) coordinates ATP.

It belongs to the ATPase alpha/beta chains family. In terms of assembly, F-type ATPases have 2 components, CF(1) - the catalytic core - and CF(0) - the membrane proton channel. CF(1) has five subunits: alpha(3), beta(3), gamma(1), delta(1), epsilon(1). CF(0) has four main subunits: a(1), b(1), b'(1) and c(9-12).

It localises to the plastid. Its subcellular location is the chloroplast thylakoid membrane. The enzyme catalyses ATP + H2O + 4 H(+)(in) = ADP + phosphate + 5 H(+)(out). Functionally, produces ATP from ADP in the presence of a proton gradient across the membrane. The catalytic sites are hosted primarily by the beta subunits. This is ATP synthase subunit beta, chloroplastic from Populus tremuloides (Quaking aspen).